Here is a 393-residue protein sequence, read N- to C-terminus: Phospho-N-acetylmuramoyl-pentapeptide-transferase (393 aa).

10 helical membrane passes run 29–49, 75–95, 101–121, 138–158, 194–214, 226–246, 263–283, 290–310, 315–335, and 370–390; these read RAVMSAMTALLLGLVFGPWVI, TPTMGGVLILLSIAVSTLLWF, FVWVVMLVTFGFGAIGWVDDW, YLWQSLIGLVAAIYLAFSVSE, VSYPLGVFGFIFLTYFVIVGA, GLAIMPVVLVGSALGLFAYVT, AGELLIFCAAMAGAGLAFLWF, VFMGDVGALALGGALGTIAVI, IVLGIMGGIFVVEALSVMAQV, and QVVVRFWIITMLLCLVGLSTL.

Belongs to the glycosyltransferase 4 family. MraY subfamily. It depends on Mg(2+) as a cofactor.

It localises to the cell inner membrane. It carries out the reaction UDP-N-acetyl-alpha-D-muramoyl-L-alanyl-gamma-D-glutamyl-meso-2,6-diaminopimeloyl-D-alanyl-D-alanine + di-trans,octa-cis-undecaprenyl phosphate = di-trans,octa-cis-undecaprenyl diphospho-N-acetyl-alpha-D-muramoyl-L-alanyl-D-glutamyl-meso-2,6-diaminopimeloyl-D-alanyl-D-alanine + UMP. The protein operates within cell wall biogenesis; peptidoglycan biosynthesis. In terms of biological role, catalyzes the initial step of the lipid cycle reactions in the biosynthesis of the cell wall peptidoglycan: transfers peptidoglycan precursor phospho-MurNAc-pentapeptide from UDP-MurNAc-pentapeptide onto the lipid carrier undecaprenyl phosphate, yielding undecaprenyl-pyrophosphoryl-MurNAc-pentapeptide, known as lipid I. In Leptothrix cholodnii (strain ATCC 51168 / LMG 8142 / SP-6) (Leptothrix discophora (strain SP-6)), this protein is Phospho-N-acetylmuramoyl-pentapeptide-transferase.